A 193-amino-acid polypeptide reads, in one-letter code: Oligoribonuclease (193 aa).

The Exonuclease domain maps to 20–183 (FVWLDCEMTG…ADVHESIEEL (164 aa)). The active site involves tyrosine 141.

Belongs to the oligoribonuclease family.

Its subcellular location is the cytoplasm. 3'-to-5' exoribonuclease specific for small oligoribonucleotides. The sequence is that of Oligoribonuclease from Paracidovorax citrulli (strain AAC00-1) (Acidovorax citrulli).